A 352-amino-acid chain; its full sequence is Rhodopsin (352 aa).

Topologically, residues Met1 to Ala36 are extracellular. N-linked (GlcNAc...) asparagine glycosylation is found at Asn2 and Asn15. A helical transmembrane segment spans residues Tyr37–Val61. The Cytoplasmic portion of the chain corresponds to Thr62–Asn73. Residues Tyr74–Tyr96 traverse the membrane as a helical segment. At Thr97–Cys110 the chain is on the extracellular side. Cysteines 110 and 187 form a disulfide. A helical membrane pass occupies residues Asn111–Ile133. The 'Ionic lock' involved in activated form stabilization motif lies at Glu134–Trp136. The Cytoplasmic portion of the chain corresponds to Glu134–His152. Residues Ala153–Val173 form a helical membrane-spanning segment. The Extracellular portion of the chain corresponds to Gly174–Ser202. Asn200 carries N-linked (GlcNAc...) asparagine glycosylation. The helical transmembrane segment at Phe203–Gly224 threads the bilayer. The Cytoplasmic segment spans residues Arg225–Arg252. The chain crosses the membrane as a helical span at residues Met253–Tyr274. The Extracellular portion of the chain corresponds to Ile275–Leu286. The chain crosses the membrane as a helical span at residues Phe287–Cys308. Lys296 carries the post-translational modification N6-(retinylidene)lysine. The Cytoplasmic segment spans residues Met309–Ala352. 2 S-palmitoyl cysteine lipidation sites follow: Cys322 and Cys323. Positions Glu331–Ala352 are disordered. Residues Ser342 to Ala352 show a composition bias toward low complexity.

It belongs to the G-protein coupled receptor 1 family. Opsin subfamily. In terms of processing, phosphorylated on some or all of the serine and threonine residues present in the C-terminal region. Post-translationally, contains one covalently linked retinal chromophore.

It is found in the membrane. The protein localises to the cell projection. The protein resides in the cilium. It localises to the photoreceptor outer segment. Functionally, photoreceptor required for image-forming vision at low light intensity. While most salt water fish species use retinal as chromophore, most freshwater fish use 3-dehydroretinal, or a mixture of retinal and 3-dehydroretinal. Light-induced isomerization of 11-cis to all-trans retinal triggers a conformational change that activates signaling via G-proteins. Subsequent receptor phosphorylation mediates displacement of the bound G-protein alpha subunit by arrestin and terminates signaling. The protein is Rhodopsin (rho) of Gobius niger (Black goby).